A 462-amino-acid polypeptide reads, in one-letter code: Glycoprotein endo-alpha-1,2-mannosidase (462 aa).

The Cytoplasmic portion of the chain corresponds to 1–9 (MAKFRRRTC). Residues 10 to 30 (ILLSLFILFIFSLMMGLKMLW) form a helical; Signal-anchor for type II membrane protein membrane-spanning segment. Over 31–462 (PNAASFGPPF…YALDQQQPAS (432 aa)) the chain is Lumenal. Residues 60-462 (DFQRSDRINM…YALDQQQPAS (403 aa)) form a catalytic region.

The protein belongs to the glycosyl hydrolase 99 family. Post-translationally, undergoes proteolytic cleavage in the C-terminal region.

Its subcellular location is the golgi apparatus membrane. The enzyme catalyses N-{alpha-Glc-(1-&gt;3)-alpha-Man-(1-&gt;2)-alpha-Man-(1-&gt;2)-alpha-Man-(1-&gt;3)-[alpha-Man-(1-&gt;2)-alpha-Man-(1-&gt;3)-[alpha-Man-(1-&gt;2)-alpha-Man-(1-&gt;6)]-alpha-Man-(1-&gt;6)]-beta-Man-(1-&gt;4)-beta-GlcNAc-(1-&gt;4)-beta-GlcNAc}-L-asparaginyl-[protein] + H2O = alpha-D-glucosyl-(1-&gt;3)-D-mannopyranose + N(4)-{alpha-D-Man-(1-&gt;2)-alpha-D-Man-(1-&gt;3)-[alpha-D-Man-(1-&gt;2)-alpha-D-Man-(1-&gt;3)-[alpha-D-Man-(1-&gt;2)-alpha-D-Man-(1-&gt;6)]-alpha-D-Man-(1-&gt;6)]-beta-D-Man-(1-&gt;4)-beta-D-GlaNAc-(1-&gt;4)-beta-D-GlcNAc}-L-asparaginyl-[protein] (N-glucan mannose isomer 8A1,2,3B1,2). The polypeptide is Glycoprotein endo-alpha-1,2-mannosidase (Manea) (Mus musculus (Mouse)).